Reading from the N-terminus, the 394-residue chain is L-lactate dehydrogenase (394 aa).

In terms of domain architecture, FMN hydroxy acid dehydrogenase spans 1-380 (MIISAASDYR…SRDSLVQNAE (380 aa)). Y24 serves as a coordination point for substrate. FMN contacts are provided by S106 and Q127. Y129 is a binding site for substrate. T155 lines the FMN pocket. Residue R164 coordinates substrate. K251 lines the FMN pocket. H275 functions as the Proton acceptor in the catalytic mechanism. A substrate-binding site is contributed by R278. 306–330 (DSGIRNGLDVVRMIALGADSVLLGR) contributes to the FMN binding site.

This sequence belongs to the FMN-dependent alpha-hydroxy acid dehydrogenase family. It depends on FMN as a cofactor.

It is found in the cell inner membrane. It catalyses the reaction (S)-lactate + A = pyruvate + AH2. Its function is as follows. Catalyzes the conversion of L-lactate to pyruvate. Is coupled to the respiratory chain. This chain is L-lactate dehydrogenase, found in Klebsiella pneumoniae subsp. pneumoniae (strain ATCC 700721 / MGH 78578).